A 187-amino-acid chain; its full sequence is DNA-3-methyladenine glycosylase 1 (187 aa).

Zn(2+)-binding residues include C4, H17, H175, and C179.

It catalyses the reaction Hydrolysis of alkylated DNA, releasing 3-methyladenine.. Activity is controlled by product inhibition. In terms of biological role, hydrolysis of the deoxyribose N-glycosidic bond to excise 3-methyladenine from the damaged DNA polymer formed by alkylation lesions. The protein is DNA-3-methyladenine glycosylase 1 of Escherichia coli (strain K12).